A 112-amino-acid chain; its full sequence is uncharacterized protein (112 aa).

Residues 1–21 (MYLSAQLMRTVTASHLTLRAL) constitute a mitochondrion transit peptide.

It localises to the mitochondrion. This is an uncharacterized protein from Saccharomyces cerevisiae (strain ATCC 204508 / S288c) (Baker's yeast).